We begin with the raw amino-acid sequence, 140 residues long: GTP-dependent dephospho-CoA kinase (140 aa).

GTP contacts are provided by D21, V22, V23, D40, K42, and E92.

It belongs to the GTP-dependent DPCK family.

It catalyses the reaction 3'-dephospho-CoA + GTP = GDP + CoA + H(+). It functions in the pathway cofactor biosynthesis; coenzyme A biosynthesis. In terms of biological role, catalyzes the GTP-dependent phosphorylation of the 3'-hydroxyl group of dephosphocoenzyme A to form coenzyme A (CoA). The polypeptide is GTP-dependent dephospho-CoA kinase (Pyrobaculum aerophilum (strain ATCC 51768 / DSM 7523 / JCM 9630 / CIP 104966 / NBRC 100827 / IM2)).